We begin with the raw amino-acid sequence, 101 residues long: MTSPAAPAATPVADKLPETLTEPNLPWMCICWDDPVNLMSYVTYVFQTVLGYSRKRATELMMQVHTEGKAVVSSGERDKVEGDVKKLQTAGLWATMQRADG.

The protein belongs to the ClpS family. As to quaternary structure, binds to the N-terminal domain of the chaperone ClpA.

Involved in the modulation of the specificity of the ClpAP-mediated ATP-dependent protein degradation. This is ATP-dependent Clp protease adapter protein ClpS from Corynebacterium jeikeium (strain K411).